The following is a 398-amino-acid chain: Elongation factor Tu (398 aa).

A tr-type G domain is found at 10-207; that stretch reads KPHVNIGTIG…TVDSYIPEPE (198 aa). The G1 stretch occupies residues 19–26; that stretch reads GHVDHGKT. Residue 19-26 coordinates GTP; sequence GHVDHGKT. T26 lines the Mg(2+) pocket. Residues 63–67 form a G2 region; it reads GITIN. The segment at 84–87 is G3; that stretch reads DAPG. Residues 84–88 and 139–142 each bind GTP; these read DAPGH and NKVD. The tract at residues 139–142 is G4; it reads NKVD. Residues 177–179 form a G5 region; sequence SAL.

Belongs to the TRAFAC class translation factor GTPase superfamily. Classic translation factor GTPase family. EF-Tu/EF-1A subfamily. Monomer.

It is found in the cytoplasm. The catalysed reaction is GTP + H2O = GDP + phosphate + H(+). Its function is as follows. GTP hydrolase that promotes the GTP-dependent binding of aminoacyl-tRNA to the A-site of ribosomes during protein biosynthesis. This chain is Elongation factor Tu, found in Streptococcus pyogenes serotype M28 (strain MGAS6180).